The sequence spans 311 residues: MKKGNKTVWNECIDILDNVKSPSFSANFDDYFKKSKSKPPKKNKKVLNNIKKAELKLKKKANKKQKANTLYIPPFAQQAKGIVITINKMWKNVHNDDSKQEISILSDVSLQIAYGEIVIILGSSGSGKTTLLNLIGGYDSISLGSCIVANCPLEKCTSEQLLTYRKNNLGYVYQRYNLIELLSAYDNIAISQNLIPKYQRRLDIEELAEKLDIKEILYKFPYEMSGGQKQRVAIARAIIKEPKLLLCDEPTGALDSNSAENIINLLQTINKTYKQTILMVTHDVSLTRIANRIIKISDGKIVSNQLVRPLV.

One can recognise an ABC transporter domain in the interval 84–310 (ITINKMWKNV…IVSNQLVRPL (227 aa)). Residue 122–129 (GSSGSGKT) coordinates ATP.

It belongs to the ABC transporter superfamily.

This is Putative ABC transporter ATP-binding protein MG467 from Mycoplasma genitalium (strain ATCC 33530 / DSM 19775 / NCTC 10195 / G37) (Mycoplasmoides genitalium).